The sequence spans 403 residues: Acetate kinase (403 aa).

Asn7 contacts Mg(2+). Lys14 lines the ATP pocket. A substrate-binding site is contributed by Arg90. Asp147 (proton donor/acceptor) is an active-site residue. ATP contacts are provided by residues 207–211, 283–285, and 331–335; these read HIGNG, DMR, and GVGEN. A Mg(2+)-binding site is contributed by Glu386.

The protein belongs to the acetokinase family. As to quaternary structure, homodimer. It depends on Mg(2+) as a cofactor. The cofactor is Mn(2+).

It is found in the cytoplasm. It catalyses the reaction acetate + ATP = acetyl phosphate + ADP. Its pathway is metabolic intermediate biosynthesis; acetyl-CoA biosynthesis; acetyl-CoA from acetate: step 1/2. Functionally, catalyzes the formation of acetyl phosphate from acetate and ATP. Can also catalyze the reverse reaction. This Thermotoga petrophila (strain ATCC BAA-488 / DSM 13995 / JCM 10881 / RKU-1) protein is Acetate kinase.